The chain runs to 96 residues: MKCFAQIVVLLLVIAFSHGAVITGACDRDVQCGSGTCCAASLWSRNIRFCVPLGNNGEECHPASHKVPYNGKRLSSLCPCKSGLTCSKSGEKFQCS.

The first 19 residues, 1–19 (MKCFAQIVVLLLVIAFSHG), serve as a signal peptide directing secretion. 5 disulfide bridges follow: C26-C38, C32-C50, C37-C78, C60-C86, and C80-C95.

Belongs to the AVIT (prokineticin) family. Expressed by the skin glands.

Its subcellular location is the secreted. Functionally, potent agonist for both PKR1/PROKR1 and PKR2/PROKR2, and inducer of a potent and long-lasting hyperalgesia. Also potentiates capsaicin-induced TRPV1 current when tested on DRG neurons. At subnanomolar concentrations, this protein both induces potent chemotaxis of macrophages and stimulates LPS-induced production of the pro-inflammatory cytokines IL-1 and IL-12. In vivo, potently stimulates the contraction of the guinea-pig gastrointestinal (GI) smooth muscle (nanomolar concentration) and rabbit aortic rings. This chain is Prokineticin Bv8-like peptide 2, found in Bombina maxima (Giant fire-bellied toad).